The sequence spans 309 residues: NAD kinase (309 aa).

Residue D89 is the Proton acceptor of the active site. Residues 89–90 (DG), 163–164 (NE), H174, R191, D193, and 204–209 (TAYALS) each bind NAD(+).

This sequence belongs to the NAD kinase family. Requires a divalent metal cation as cofactor.

It localises to the cytoplasm. It catalyses the reaction NAD(+) + ATP = ADP + NADP(+) + H(+). Its function is as follows. Involved in the regulation of the intracellular balance of NAD and NADP, and is a key enzyme in the biosynthesis of NADP. Catalyzes specifically the phosphorylation on 2'-hydroxyl of the adenosine moiety of NAD to yield NADP. The polypeptide is NAD kinase (Shewanella baltica (strain OS185)).